A 124-amino-acid chain; its full sequence is Small ribosomal subunit protein uS12 (124 aa).

Residue Asp-89 is modified to 3-methylthioaspartic acid. Residues 105-124 (QGVKNRGQARSRYGAKKEKK) form a disordered region. The segment covering 111–124 (GQARSRYGAKKEKK) has biased composition (basic residues).

The protein belongs to the universal ribosomal protein uS12 family. As to quaternary structure, part of the 30S ribosomal subunit. Contacts proteins S8 and S17. May interact with IF1 in the 30S initiation complex.

Functionally, with S4 and S5 plays an important role in translational accuracy. Interacts with and stabilizes bases of the 16S rRNA that are involved in tRNA selection in the A site and with the mRNA backbone. Located at the interface of the 30S and 50S subunits, it traverses the body of the 30S subunit contacting proteins on the other side and probably holding the rRNA structure together. The combined cluster of proteins S8, S12 and S17 appears to hold together the shoulder and platform of the 30S subunit. The polypeptide is Small ribosomal subunit protein uS12 (Micrococcus luteus (Micrococcus lysodeikticus)).